The chain runs to 604 residues: Glutamine--fructose-6-phosphate aminotransferase [isomerizing] (604 aa).

C2 (nucleophile; for GATase activity) is an active-site residue. In terms of domain architecture, Glutamine amidotransferase type-2 spans 2-216 (CGIVGYVGFR…DGDVVRLTRE (215 aa)). 2 consecutive SIS domains span residues 281–420 (LALD…GRGA) and 453–594 (VAEK…VDQP). K599 acts as the For Fru-6P isomerization activity in catalysis.

As to quaternary structure, homodimer.

It localises to the cytoplasm. The enzyme catalyses D-fructose 6-phosphate + L-glutamine = D-glucosamine 6-phosphate + L-glutamate. In terms of biological role, catalyzes the first step in hexosamine metabolism, converting fructose-6P into glucosamine-6P using glutamine as a nitrogen source. The protein is Glutamine--fructose-6-phosphate aminotransferase [isomerizing] of Thermus thermophilus (strain ATCC 27634 / DSM 579 / HB8).